Consider the following 330-residue polypeptide: MIVLGIETSCDETSVAILSDGKILSNVVSSQIDIHKKFGGVVPEIAARHHLSNLPIVFKNAIDMANISIDQIDLISVTYGPGLIGALLVGISFAKGLSLRLGKPLIGVNHIVGHVFANYITYPHLKPPYIVLMVSGGHTEILLVKQDDEIEVLGKTVDDAAGEAFDKVARILGLGYPGGPEIDKLSKNGDENKFNFPRPMMDSKSYNFSFSGLKTAVLYTVQKFDKDNVPKEDIAASFQKAVVEILLKKTFKAAKDLNVNTIVLAGGVAANSYLRKKAQKLSEKQNIKVLIPPLEFCTDNAAMIAMAGYKLYKKGISSDSTLEAVPNLKI.

Residues His-110 and His-114 each contribute to the Fe cation site. Substrate is bound by residues 133–137 (MVSGG), Asp-166, Gly-179, Asp-183, and Asn-271. Asp-299 is a Fe cation binding site.

The protein belongs to the KAE1 / TsaD family. Requires Fe(2+) as cofactor.

The protein localises to the cytoplasm. It catalyses the reaction L-threonylcarbamoyladenylate + adenosine(37) in tRNA = N(6)-L-threonylcarbamoyladenosine(37) in tRNA + AMP + H(+). In terms of biological role, required for the formation of a threonylcarbamoyl group on adenosine at position 37 (t(6)A37) in tRNAs that read codons beginning with adenine. Is involved in the transfer of the threonylcarbamoyl moiety of threonylcarbamoyl-AMP (TC-AMP) to the N6 group of A37, together with TsaE and TsaB. TsaD likely plays a direct catalytic role in this reaction. The polypeptide is tRNA N6-adenosine threonylcarbamoyltransferase (Thermosipho africanus (strain TCF52B)).